A 160-amino-acid chain; its full sequence is Phosphopantetheine adenylyltransferase (160 aa).

Ser-10 provides a ligand contact to substrate. Residues 10 to 11 (SF) and His-18 each bind ATP. Residues Lys-42, Thr-74, and Arg-88 each contribute to the substrate site. ATP contacts are provided by residues 89–91 (GLR), Glu-99, and 124–130 (YSFISST).

It belongs to the bacterial CoaD family. Homohexamer. Mg(2+) serves as cofactor.

It localises to the cytoplasm. The enzyme catalyses (R)-4'-phosphopantetheine + ATP + H(+) = 3'-dephospho-CoA + diphosphate. It functions in the pathway cofactor biosynthesis; coenzyme A biosynthesis; CoA from (R)-pantothenate: step 4/5. Reversibly transfers an adenylyl group from ATP to 4'-phosphopantetheine, yielding dephospho-CoA (dPCoA) and pyrophosphate. The polypeptide is Phosphopantetheine adenylyltransferase (Leptospira interrogans serogroup Icterohaemorrhagiae serovar copenhageni (strain Fiocruz L1-130)).